Consider the following 318-residue polypeptide: Glutathione synthetase (318 aa).

The region spanning lysine 128–alanine 313 is the ATP-grasp domain. Leucine 154–glycine 210 lines the ATP pocket. Residues glutamate 284 and asparagine 286 each contribute to the Mg(2+) site.

The protein belongs to the prokaryotic GSH synthase family. The cofactor is Mg(2+). Mn(2+) is required as a cofactor.

The enzyme catalyses gamma-L-glutamyl-L-cysteine + glycine + ATP = glutathione + ADP + phosphate + H(+). Its pathway is sulfur metabolism; glutathione biosynthesis; glutathione from L-cysteine and L-glutamate: step 2/2. The protein is Glutathione synthetase of Neisseria meningitidis serogroup A / serotype 4A (strain DSM 15465 / Z2491).